The chain runs to 171 residues: MLP-like protein 31 (171 aa).

Belongs to the MLP family.

The polypeptide is MLP-like protein 31 (MLP31) (Arabidopsis thaliana (Mouse-ear cress)).